The primary structure comprises 445 residues: Glutamate--tRNA ligase 1 (445 aa).

A 'HIGH' region motif is present at residues 9-19 (PSPTGYLHVGN). Positions 238-242 (KISKR) match the 'KMSKS' region motif. Lysine 241 is an ATP binding site.

The protein belongs to the class-I aminoacyl-tRNA synthetase family. Glutamate--tRNA ligase type 1 subfamily. In terms of assembly, monomer.

It is found in the cytoplasm. It catalyses the reaction tRNA(Glu) + L-glutamate + ATP = L-glutamyl-tRNA(Glu) + AMP + diphosphate. Its function is as follows. Catalyzes the attachment of glutamate to tRNA(Glu) in a two-step reaction: glutamate is first activated by ATP to form Glu-AMP and then transferred to the acceptor end of tRNA(Glu). The protein is Glutamate--tRNA ligase 1 of Ehrlichia ruminantium (strain Gardel).